The chain runs to 205 residues: TATA-box-binding protein (205 aa).

2 tandem repeats follow at residues 27–103 and 117–194.

It belongs to the TBP family. In terms of assembly, belongs to the TFIID complex together with the TBP-associated factors (TAFs). Binds DNA as monomer.

The protein localises to the nucleus. General transcription factor that functions at the core of the DNA-binding multiprotein factor TFIID. Binding of TFIID to the TATA box is the initial transcriptional step of the pre-initiation complex (PIC), playing a role in the activation of eukaryotic genes transcribed by RNA polymerase II. This Dictyostelium discoideum (Social amoeba) protein is TATA-box-binding protein (tbpA).